The sequence spans 168 residues: Transcriptional regulator MraZ (168 aa).

2 consecutive SpoVT-AbrB domains span residues 8–51 (EYNQ…GGDR) and 90–140 (ALNM…KADI).

The protein belongs to the MraZ family. Forms oligomers.

Its subcellular location is the cytoplasm. The protein localises to the nucleoid. In Cereibacter sphaeroides (strain KD131 / KCTC 12085) (Rhodobacter sphaeroides), this protein is Transcriptional regulator MraZ.